Consider the following 270-residue polypeptide: MTVLKEQPPRLLRGIPLAANDLRRTFGQREVLRGVDLHIPAGQFVAIVGRSGCGKSTLLRLLAGLDQPSGGELLAGAAPLAEAREDTRLMFQDARLLPWKKVIDNVGLGLSGNWRPRALEALDAVGLAERAHEWPAALSGGQKQRVALARALIHQPRLLLLDEPLGALDALTRIEMQQLIERLWRQHGFTVLLVTHDVSEAVAVADRVILIEDGAVGLDLVVDLPRPRVRGSHRLAALESEVLNRVLSVPGTPPEPEPVAPLPTHLRWAH.

Residues 17–238 (LAANDLRRTF…VRGSHRLAAL (222 aa)) enclose the ABC transporter domain. 49 to 56 (GRSGCGKS) serves as a coordination point for ATP. The disordered stretch occupies residues 250 to 270 (PGTPPEPEPVAPLPTHLRWAH). Residues 251–261 (GTPPEPEPVAP) are compositionally biased toward pro residues.

Belongs to the ABC transporter superfamily. Aliphatic sulfonates importer (TC 3.A.1.17.2) family. In terms of assembly, the complex is composed of two ATP-binding proteins (SsuB), two transmembrane proteins (SsuC) and a solute-binding protein (SsuA).

It localises to the cell inner membrane. It catalyses the reaction ATP + H2O + aliphatic sulfonate-[sulfonate-binding protein]Side 1 = ADP + phosphate + aliphatic sulfonateSide 2 + [sulfonate-binding protein]Side 1.. In terms of biological role, part of the ABC transporter complex SsuABC involved in aliphatic sulfonates import. Responsible for energy coupling to the transport system. This chain is Aliphatic sulfonates import ATP-binding protein SsuB, found in Pseudomonas entomophila (strain L48).